The primary structure comprises 440 residues: GTPase Der (440 aa).

2 EngA-type G domains span residues 4 to 169 and 178 to 353; these read PVVA…PEED and IKVA…DQAA. Residues 10–17, 57–61, 120–123, 184–191, 231–235, and 296–299 contribute to the GTP site; these read GRPNVGKS, DTGGI, NKVD, GKPNVGKS, DTAGI, and NKWD. The 85-residue stretch at 354 to 438 folds into the KH-like domain; sequence MRISTGVLND…PIKFILREKE (85 aa).

Belongs to the TRAFAC class TrmE-Era-EngA-EngB-Septin-like GTPase superfamily. EngA (Der) GTPase family. As to quaternary structure, associates with the 50S ribosomal subunit.

Its function is as follows. GTPase that plays an essential role in the late steps of ribosome biogenesis. This chain is GTPase Der, found in Acetivibrio thermocellus (strain ATCC 27405 / DSM 1237 / JCM 9322 / NBRC 103400 / NCIMB 10682 / NRRL B-4536 / VPI 7372) (Clostridium thermocellum).